We begin with the raw amino-acid sequence, 31 residues long: Cyclotide mech-5 (31 aa).

The cyclopeptide (Gly-Asp) cross-link spans 1–31; it reads GVIPCGESCVFIPCISSVVGCTCKNKVCYRD. 3 disulfide bridges follow: C5–C21, C9–C23, and C14–C28.

In terms of processing, this is a cyclic peptide. Post-translationally, contains 3 disulfide bonds.

Its function is as follows. Probably participates in a plant defense mechanism (Potential). Binds to and induces leakage in phospholipd membranes, particularly ones containing 1-palmitoyl-2-oleophosphatidylethanolamine (POPE). The protein is Cyclotide mech-5 of Melicytus chathamicus (Chatham Island mahoe).